A 291-amino-acid polypeptide reads, in one-letter code: Ribosomal RNA small subunit methyltransferase H (291 aa).

Residues 25-27, Asp45, Phe73, Asp88, and Gln95 contribute to the S-adenosyl-L-methionine site; that span reads GGH.

This sequence belongs to the methyltransferase superfamily. RsmH family.

The protein resides in the cytoplasm. The enzyme catalyses cytidine(1402) in 16S rRNA + S-adenosyl-L-methionine = N(4)-methylcytidine(1402) in 16S rRNA + S-adenosyl-L-homocysteine + H(+). Functionally, specifically methylates the N4 position of cytidine in position 1402 (C1402) of 16S rRNA. The polypeptide is Ribosomal RNA small subunit methyltransferase H (Flavobacterium psychrophilum (strain ATCC 49511 / DSM 21280 / CIP 103535 / JIP02/86)).